The sequence spans 991 residues: Adhesion G-protein coupled receptor F3 (991 aa).

The first 20 residues, 1–20 (MSSLALSQLLLAVTLPLLEL), serve as a signal peptide directing secretion. Topologically, residues 21-694 (EPTFVPTAQS…ENPTLDLLSQ (674 aa)) are extracellular. N75, N102, N118, N321, N362, N484, N571, N589, N630, and N660 each carry an N-linked (GlcNAc...) asparagine glycan. The region spanning 519-684 (HPFSFSSANV…SILMSQHTVP (166 aa)) is the GAIN-B domain. 2 disulfides stabilise this stretch: C635-C666 and C654-C668. The GPS stretch occupies residues 635–684 (CVFWDHRVFQGQGGWSDEGCEVHAANASITQCICQHLTAFSILMSQHTVP). The chain crosses the membrane as a helical span at residues 695–715 (VGTGASVLALLVCLAIYGLVW). Residues 716-730 (RVVVRNKVAFFRHTT) are Cytoplasmic-facing. The chain crosses the membrane as a helical span at residues 731 to 751 (LFNMVICLLVADTCFLGSPFL). Over 752–757 (PSGYHS) the chain is Extracellular. A helical transmembrane segment spans residues 758–778 (LICLVTAFLCHFFYLATFFWM). Residues 779-799 (LAQALVLAHQLLFVFHQLSKH) lie on the Cytoplasmic side of the membrane. The helical transmembrane segment at 800–820 (VVLSLMVMLGYLCPLGFAGVT) threads the bilayer. Residues 821–850 (LGLYLPQRKYLWEGKCFLNGGGVMLYSFSE) are Extracellular-facing. Residues 851–871 (PVLAIVGVNGLVLVIAVLKLL) traverse the membrane as a helical segment. The Cytoplasmic segment spans residues 872 to 892 (RPSLSEGPTVEKRQALVGVLK). Residues 893–913 (ALLILTPIFGLTWGLGVATLF) form a helical membrane-spanning segment. Topologically, residues 914-916 (DGS) are extracellular. The chain crosses the membrane as a helical span at residues 917–937 (IVSHYAFSILNSLQGVFILVF). Over 938-991 (GCLTDKKVLEALRKRLRGSRSSNSAISMVTNETYTSEHSKERSEPASYEERMTD) the chain is Cytoplasmic. Positions 964 to 991 (SMVTNETYTSEHSKERSEPASYEERMTD) are disordered. Over residues 972-991 (TSEHSKERSEPASYEERMTD) the composition is skewed to basic and acidic residues.

The protein belongs to the G-protein coupled receptor 2 family. Adhesion G-protein coupled receptor (ADGR) subfamily. In terms of assembly, heterodimer of 2 chains generated by proteolytic processing; the large extracellular N-terminal fragment and the membrane-bound C-terminal fragment predominantly remain associated and non-covalently linked. In terms of processing, autoproteolytically processed at the GPS region of the GAIN-B domain; this cleavage modulates receptor activity. Expression is restricted to testis and circumvallate papillae.

The protein resides in the membrane. In terms of biological role, orphan receptor. This is Adhesion G-protein coupled receptor F3 (ADGRF3) from Mus musculus (Mouse).